The sequence spans 140 residues: Phosphatidylinositol N-acetylglucosaminyltransferase subunit GPI19 (140 aa).

At 1-12 (MYTKEYYWFSQY) the chain is on the cytoplasmic side. The chain crosses the membrane as a helical span at residues 13-33 (MIITSTLVLTIIWSILPSSLG). The Lumenal portion of the chain corresponds to 34–52 (EAAPKQFINTLLDIFPQRR). The chain crosses the membrane as a helical span at residues 53–73 (WIITLESIMLMGMLCTYIGLL). Residues 74-140 (MYNEDTLTPP…YLYDNDHTST (67 aa)) lie on the Cytoplasmic side of the membrane.

Belongs to the GPI19 family. Component of the phosphatidylinositol N-acetylglucosaminyltransferase (GPI-GlcNAc transferase) complex composed of at least GPI1, GPI2, GPI3, GPI15, GPI19 and ERI1. Interacts with GPI2.

It localises to the endoplasmic reticulum membrane. The enzyme catalyses a 1,2-diacyl-sn-glycero-3-phospho-(1D-myo-inositol) + UDP-N-acetyl-alpha-D-glucosamine = a 6-(N-acetyl-alpha-D-glucosaminyl)-1-(1,2-diacyl-sn-glycero-3-phospho)-1D-myo-inositol + UDP + H(+). The protein operates within glycolipid biosynthesis; glycosylphosphatidylinositol-anchor biosynthesis. Part of the complex catalyzing the transfer of N-acetylglucosamine from UDP-N-acetylglucosamine to phosphatidylinositol, the first step of GPI biosynthesis. Involved in cell wall biosynthesis. The sequence is that of Phosphatidylinositol N-acetylglucosaminyltransferase subunit GPI19 (GPI19) from Saccharomyces cerevisiae (strain ATCC 204508 / S288c) (Baker's yeast).